Consider the following 507-residue polypeptide: Cytochrome P450 3A28 (507 aa).

Cys-442 provides a ligand contact to heme.

Belongs to the cytochrome P450 family. It depends on heme as a cofactor.

The protein resides in the endoplasmic reticulum membrane. It localises to the microsome membrane. It catalyses the reaction an organic molecule + reduced [NADPH--hemoprotein reductase] + O2 = an alcohol + oxidized [NADPH--hemoprotein reductase] + H2O + H(+). Cytochromes P450 are a group of heme-thiolate monooxygenases. In liver microsomes, this enzyme is involved in an NADPH-dependent electron transport pathway. It oxidizes a variety of structurally unrelated compounds, including steroids, fatty acids, and xenobiotics. The chain is Cytochrome P450 3A28 (CYP3A28) from Bos taurus (Bovine).